A 709-amino-acid polypeptide reads, in one-letter code: ATP-binding cassette sub-family F member 3 (709 aa).

Alanine 2 carries the N-acetylalanine modification. Basic and acidic residues predominate over residues 129-143 (RLKAKQEKRSEKETL). The tract at residues 129-171 (RLKAKQEKRSEKETLKTSSPLVLEEASASQAGSRKESRLESSG) is disordered. Residues serine 155, serine 157, and serine 161 each carry the phosphoserine modification. A compositionally biased stretch (basic and acidic residues) spans 161–171 (SRKESRLESSG). ABC transporter domains lie at 178-424 (VRIE…LNQQ) and 492-707 (LQLD…RREG). 210 to 217 (GRNGLGKT) serves as a coordination point for ATP. Residue serine 283 is modified to Phosphoserine. 525–532 (GENGAGKS) contributes to the ATP binding site.

Belongs to the ABC transporter superfamily. ABCF family. EF3 subfamily.

In terms of biological role, displays an antiviral effect against flaviviruses such as west Nile virus (WNV) in the presence of OAS1B. The sequence is that of ATP-binding cassette sub-family F member 3 (Abcf3) from Rattus norvegicus (Rat).